The chain runs to 314 residues: Olfactory receptor 14A2 (314 aa).

The Extracellular portion of the chain corresponds to 1–26 (MANVTLVTGFLLMGFSNIQKLRILYG). N3 is a glycosylation site (N-linked (GlcNAc...) asparagine). The helical transmembrane segment at 27-47 (VLFLLIYLAALMSNLLIITLI) threads the bilayer. Residues 48 to 55 (TLDVKLQT) lie on the Cytoplasmic side of the membrane. The chain crosses the membrane as a helical span at residues 56–76 (PMYFFLKNLSFLDVFLVSVPI). Residues 77–91 (PKFIVNNLTHNNSIS) are Extracellular-facing. Residue N83 is glycosylated (N-linked (GlcNAc...) asparagine). Residues 92-112 (ILGCAFQLLLMTSFSAGEIFI) traverse the membrane as a helical segment. C95 and C177 are disulfide-bonded. The Cytoplasmic segment spans residues 113–136 (LTAMSYDRYVAICCPLNYEVIMNT). The chain crosses the membrane as a helical span at residues 137-157 (GVCVLMASVSWAIGGLFGTAY). Topologically, residues 158 to 193 (TAGTFSMPFCGSSVIPQFFCDVPSLLRISCSETLMV) are extracellular. A helical membrane pass occupies residues 194–214 (IYAGIGVGACLSISCFICIVI). Residues 215-237 (SYIYIFSTVLKIPTTKGQSKAFS) lie on the Cytoplasmic side of the membrane. A helical membrane pass occupies residues 238–258 (TCFPHLTVFTVFIITAYFVYL). The Extracellular segment spans residues 259-267 (KPPSNSPSV). A helical membrane pass occupies residues 268-290 (IDRLLSVIYTVMPPVFNPVTYSL). The Cytoplasmic segment spans residues 291–314 (RNNDMKCALIRLLQKTYGQEAYFI).

Belongs to the G-protein coupled receptor 1 family.

It localises to the cell membrane. Functionally, odorant receptor. This is Olfactory receptor 14A2 (OR14A2) from Homo sapiens (Human).